A 67-amino-acid polypeptide reads, in one-letter code: MPKLKTNRAAAKRFKFTKNNKIKRKSMNTRHILTKKGPKRRRRLRGLTLVHNSDWKSIVRLMPYGVR.

It belongs to the bacterial ribosomal protein bL35 family.

The polypeptide is Large ribosomal subunit protein bL35 (Leptospira interrogans serogroup Icterohaemorrhagiae serovar Lai (strain 56601)).